Consider the following 726-residue polypeptide: Eukaryotic translation initiation factor 3 subunit B (726 aa).

Positions 1–94 (MSAALEDIKL…LFVECASPAD (94 aa)) are sufficient for interaction with HCR1 and TIF32. The interval 1 to 219 (MSAALEDIKL…GVVMWGGPHF (219 aa)) is sufficient for interaction with PIC8. Positions 37-120 (QYIVVCGAPV…HRLFIYTMRD (84 aa)) constitute an RRM domain. 7 WD repeats span residues 142-182 (FPTS…EESV), 186-224 (RKNW…RLRR), 235-283 (VSPS…LQST), 331-374 (LKVP…MSCK), 442-485 (ELKD…FAPE), 505-549 (ITDK…TDKN), and 566-611 (NSFP…VKEE).

Belongs to the eIF-3 subunit B family. Component of the eukaryotic translation initiation factor 3 (eIF-3) complex.

The protein resides in the cytoplasm. RNA-binding component of the eukaryotic translation initiation factor 3 (eIF-3) complex, which is involved in protein synthesis of a specialized repertoire of mRNAs and, together with other initiation factors, stimulates binding of mRNA and methionyl-tRNAi to the 40S ribosome. The eIF-3 complex specifically targets and initiates translation of a subset of mRNAs involved in cell proliferation. The protein is Eukaryotic translation initiation factor 3 subunit B of Vanderwaltozyma polyspora (strain ATCC 22028 / DSM 70294 / BCRC 21397 / CBS 2163 / NBRC 10782 / NRRL Y-8283 / UCD 57-17) (Kluyveromyces polysporus).